Here is a 185-residue protein sequence, read N- to C-terminus: Ribosome-recycling factor (185 aa).

The protein belongs to the RRF family.

It is found in the cytoplasm. In terms of biological role, responsible for the release of ribosomes from messenger RNA at the termination of protein biosynthesis. May increase the efficiency of translation by recycling ribosomes from one round of translation to another. The chain is Ribosome-recycling factor from Nitrosomonas europaea (strain ATCC 19718 / CIP 103999 / KCTC 2705 / NBRC 14298).